We begin with the raw amino-acid sequence, 720 residues long: 1-deoxy-D-xylulose-5-phosphate synthase 1, chloroplastic (720 aa).

The N-terminal 51 residues, 1–51 (MALTTFSISRGGFVGALPQEGHFAPAAAELSLHKLQSRPHKARRRSSSSIS), are a transit peptide targeting the chloroplast. Residues 35–46 (LQSRPHKARRRS) are compositionally biased toward basic residues. A disordered region spans residues 35-74 (LQSRPHKARRRSSSSISASLSTEREAAEYHSQRPPTPLLD). Over residues 56-65 (TEREAAEYHS) the composition is skewed to basic and acidic residues. Thiamine diphosphate contacts are provided by residues His-142 and 183-185 (GHS). Asp-214 serves as a coordination point for Mg(2+). Residues 215 to 216 (GA), Asn-243, Tyr-364, and Glu-446 each bind thiamine diphosphate. Asn-243 lines the Mg(2+) pocket.

This sequence belongs to the transketolase family. DXPS subfamily. Homodimer. Mg(2+) serves as cofactor. It depends on thiamine diphosphate as a cofactor.

It is found in the plastid. The protein localises to the chloroplast stroma. The enzyme catalyses D-glyceraldehyde 3-phosphate + pyruvate + H(+) = 1-deoxy-D-xylulose 5-phosphate + CO2. It functions in the pathway metabolic intermediate biosynthesis; 1-deoxy-D-xylulose 5-phosphate biosynthesis; 1-deoxy-D-xylulose 5-phosphate from D-glyceraldehyde 3-phosphate and pyruvate: step 1/1. Its function is as follows. Catalyzes the acyloin condensation reaction between C atoms 2 and 3 of pyruvate and glyceraldehyde 3-phosphate to yield 1-deoxy-D-xylulose-5-phosphate (DXP). Is a limiting enzyme for plastidic isoprenoid biosynthesis and essential for chloroplast development. The polypeptide is 1-deoxy-D-xylulose-5-phosphate synthase 1, chloroplastic (CLA1) (Oryza sativa subsp. japonica (Rice)).